The sequence spans 301 residues: Rhodopsin (301 aa).

Over 1-18 the chain is Extracellular; it reads LHMIHLHWYQYPPMNPMM. The helical transmembrane segment at 19 to 43 threads the bilayer; that stretch reads YPLLLIFMLFTGILCLAGNFVTIWV. Over 44–55 the chain is Cytoplasmic; the sequence is FMNTKSLRTPAN. Residues 56-78 traverse the membrane as a helical segment; sequence LLVVNLAMSDFLMMFTMFPPMMV. At 79-92 the chain is on the extracellular side; that stretch reads TCYYHTWTLGPTFC. Cys-92 and Cys-169 are disulfide-bonded. A helical transmembrane segment spans residues 93–115; the sequence is QVYAFLGNLCGCASIWTMVFITF. The 'Ionic lock' involved in activated form stabilization motif lies at 116 to 118; sequence DRY. The Cytoplasmic portion of the chain corresponds to 116-134; that stretch reads DRYNVIVKGVAGEPLSTKK. The chain crosses the membrane as a helical span at residues 135–155; it reads ASLWILTIWVLSTTWCIAPFF. Topologically, residues 156–182 are extracellular; that stretch reads GWNHYVPEGNLTGCGTDYLSEDILSRS. Asn-165 carries N-linked (GlcNAc...) asparagine glycosylation. A helical transmembrane segment spans residues 183–204; it reads YLYVYSTWVYFLPLAITIYCYV. The Cytoplasmic segment spans residues 205–245; it reads FIIKAVAAHEKGMRDQAKKMGIKSLRNEEAQKTSAECRLAK. A helical transmembrane segment spans residues 246 to 267; sequence IAMTTVALWFIAWTPCLLINWV. The Extracellular segment spans residues 268-278; sequence GMFARSYLSPV. Residues 279–300 form a helical membrane-spanning segment; sequence YTIWGYVFAKANAVYNPIVYAI. An N6-(retinylidene)lysine modification is found at Lys-288.

It belongs to the G-protein coupled receptor 1 family. Opsin subfamily. In terms of assembly, homodimer. Interacts with GNAQ. In terms of processing, contains one covalently linked retinal chromophore.

It localises to the cell projection. It is found in the rhabdomere membrane. Photoreceptor required for image-forming vision at low light intensity. Can use both retinal and 3-dehydroretinal as visual pigment. Light-induced isomerization of 11-cis to all-trans retinal triggers a conformational change that activates signaling via G-proteins. Signaling via GNAQ probably mediates the activation of phospholipase C. This Procambarus seminolae (Crayfish) protein is Rhodopsin (RHO).